Here is a 240-residue protein sequence, read N- to C-terminus: 2,3,4,5-tetrahydropyridine-2,6-dicarboxylate N-acetyltransferase (240 aa).

Belongs to the transferase hexapeptide repeat family. DapH subfamily.

The enzyme catalyses (S)-2,3,4,5-tetrahydrodipicolinate + acetyl-CoA + H2O = L-2-acetamido-6-oxoheptanedioate + CoA. Its pathway is amino-acid biosynthesis; L-lysine biosynthesis via DAP pathway; LL-2,6-diaminopimelate from (S)-tetrahydrodipicolinate (acetylase route): step 1/3. In terms of biological role, catalyzes the transfer of an acetyl group from acetyl-CoA to tetrahydrodipicolinate. This is 2,3,4,5-tetrahydropyridine-2,6-dicarboxylate N-acetyltransferase from Bacillus thuringiensis (strain Al Hakam).